Here is a 333-residue protein sequence, read N- to C-terminus: Ketol-acid reductoisomerase (NADP(+)) (333 aa).

Residues 1–171 (MSNDTQPKIA…GGARANIIKT (171 aa)) enclose the KARI N-terminal Rossmann domain. Residues 14-17 (YGSQ), Arg37, Thr42, and 72-75 (DMVQ) each bind NADP(+). The active site involves His97. Position 123 (Gly123) interacts with NADP(+). Residues 172–317 (TFKEETETDL…KKLRAKMVWL (146 aa)) enclose the KARI C-terminal knotted domain. Residues Asp180, Glu184, Glu216, and Glu220 each contribute to the Mg(2+) site. A substrate-binding site is contributed by Ser241.

It belongs to the ketol-acid reductoisomerase family. It depends on Mg(2+) as a cofactor.

It catalyses the reaction (2R)-2,3-dihydroxy-3-methylbutanoate + NADP(+) = (2S)-2-acetolactate + NADPH + H(+). The catalysed reaction is (2R,3R)-2,3-dihydroxy-3-methylpentanoate + NADP(+) = (S)-2-ethyl-2-hydroxy-3-oxobutanoate + NADPH + H(+). Its pathway is amino-acid biosynthesis; L-isoleucine biosynthesis; L-isoleucine from 2-oxobutanoate: step 2/4. It functions in the pathway amino-acid biosynthesis; L-valine biosynthesis; L-valine from pyruvate: step 2/4. Involved in the biosynthesis of branched-chain amino acids (BCAA). Catalyzes an alkyl-migration followed by a ketol-acid reduction of (S)-2-acetolactate (S2AL) to yield (R)-2,3-dihydroxy-isovalerate. In the isomerase reaction, S2AL is rearranged via a Mg-dependent methyl migration to produce 3-hydroxy-3-methyl-2-ketobutyrate (HMKB). In the reductase reaction, this 2-ketoacid undergoes a metal-dependent reduction by NADPH to yield (R)-2,3-dihydroxy-isovalerate. The sequence is that of Ketol-acid reductoisomerase (NADP(+)) from Xanthomonas euvesicatoria pv. vesicatoria (strain 85-10) (Xanthomonas campestris pv. vesicatoria).